We begin with the raw amino-acid sequence, 897 residues long: Macoilin (897 aa).

4 consecutive transmembrane segments (helical) span residues 113–133 (ICYL…YVWI), 157–177 (QSWP…FLRI), 181–201 (PILI…PVWP), and 204–224 (LNAF…TVSM). Polar residues-rich tracts occupy residues 291-304 (IQAA…SSKK) and 329-338 (GNSGFNSTPP). The segment at 291–375 (IQAASATPPT…DTSSSTIEDQ (85 aa)) is disordered. Residues 351–361 (DMDDGDDSDDD) show a composition bias toward acidic residues. The helical transmembrane segment at 379-399 (GGISIIRFIFSSAAWLFSFVF) threads the bilayer. Over residues 403-413 (TPSENSLSNQQ) the composition is skewed to polar residues. 2 disordered regions span residues 403-535 (TPSE…QEED) and 724-770 (NGSS…SPVP). Residues 414–424 (IDDDEDYEDGD) are compositionally biased toward acidic residues. A compositionally biased stretch (polar residues) spans 432–451 (TDSMTSTTKGRANTMPSTTR). Composition is skewed to low complexity over residues 452–467 (SQNN…QSNG) and 475–490 (SHQN…SNGH). The stretch at 503–726 (DTNASNETDI…VQEFQIKNGS (224 aa)) forms a coiled coil. Basic and acidic residues predominate over residues 510 to 535 (TDIRSMSRELESLRSEISSRRSQEED). The segment covering 734–761 (ETLMNGRSSTEANNENDTTASDQSSPHQ) has biased composition (polar residues).

As to expression, strong expression in many neurons, very weak expression is also detected in others tissues.

Its subcellular location is the rough endoplasmic reticulum membrane. The protein resides in the nucleus membrane. Functionally, plays a role in the regulation of neuronal activity. In AWA and AWC neurons, plays a role in regulating olfactory adaptation by controlling the forgetting sensory responses to odorants such as diacetyl and isoamyl alcohol. May play a role in regulating daf-7 expression in ASI neurons in response to bacterial small RNAs. In ASI neurons, promotes dauer formation in response to pheromones such as the ascarosides ascr#2 and ascr#3. The protein is Macoilin of Caenorhabditis elegans.